Reading from the N-terminus, the 490-residue chain is Protein twist (490 aa).

Disordered regions lie at residues 48–74, 98–167, and 330–359; these read QLQHQQQHLHSHQHHQQHQQQQQQHTQ, PSNE…TGGS, and LDGSDAGGKAFRKPRRRLKRKPSKTEETDE. Over residues 54 to 64 the composition is skewed to basic residues; that stretch reads QHLHSHQHHQQ. Composition is skewed to low complexity over residues 65-74 and 104-135; these read HQQQQQQHTQ and STSSNQSAQSTSLEMNNNNTSSNNTSSGNNPS. Residues 339–351 show a composition bias toward basic residues; sequence AFRKPRRRLKRKP. The 52-residue stretch at 362-413 folds into the bHLH domain; sequence NQRVMANVRERQRTQSLNDAFKSLQQIIPTLPSDKLSKIQTLKLATRYIDFL.

In terms of assembly, efficient DNA binding requires dimerization with another bHLH protein. Homodimer.

Its subcellular location is the nucleus. Functionally, involved in the establishment and dorsoventral patterning of germ layers in the embryo. The polypeptide is Protein twist (Drosophila erecta (Fruit fly)).